Reading from the N-terminus, the 75-residue chain is uncharacterized protein (75 aa).

This is an uncharacterized protein from Saccharomyces cerevisiae (strain ATCC 204508 / S288c) (Baker's yeast).